We begin with the raw amino-acid sequence, 696 residues long: TASGKLQRKFLDRFAISMGRGVALGKTYGTLGAASRGATLLQDLLFTEIIFAFDRERVPERAVHARGTGAHGTFLSYEDWSNLTAASFLSAEGKFTPEMTRFSTVSGARGSADTARDVHGFATRFYVDEGNFDIVGNNIPVFFIWDVIIEPTLMALHAQKPNPRFHLPRGQQDPNRISDNLTARGDSLAQGSQISSERGSPKAYSNTEPNKHRSFRLVTDNGKQFQCSNHWQPLQGFIDLGVEEAWRFPEEGEGYVAENLFESIELLTVGDEELEIQSMSFNNDLRERFNSSEVTKSSVVRLVPLITQGKLVFNKNIQMLFNEVIGAMFQPGHIVRGVDFTEDPLLQGRLFSYLDTQLNRHGPNIQQLGFNRPPRAPIHNNNRDGAGEMIDLPPFASFVETQEWGAKDIKQTAVGQNKFDQEHRFSHWKFGVNGFVHTRNDDNVTHARGFFTAPERGQQKKRVAAFDRMFTVVGLSVDGQQANSDQYADFDAAAGKKVAKAIGVEAPKPNSNYFHPTDVFGEHIAASGTKYGVPEGNTKGVLLASVNKPASIAQGAKLQVVASSGDFAEFFISAKQLNMREVTQGIIPLVPVLKLAKLDLGKTFRFQLMQVGNIEELERFGFDLPDLTDKQVDLSAMGMFETTFRPTSRAAQFEQGKTKLVKGLQGKNAFMDRALKQPSNNREKIQRFADRFAVQD.

Residues His-64 and Asn-137 contribute to the active site. The disordered stretch occupies residues 187–211 (SLAQGSQISSERGSPKAYSNTEPNK). Residues 189–208 (AQGSQISSERGSPKAYSNTE) show a composition bias toward polar residues. Tyr-353 lines the heme pocket.

It belongs to the catalase family. Requires heme as cofactor.

It catalyses the reaction 2 H2O2 = O2 + 2 H2O. Its function is as follows. Occurs in almost all aerobically respiring organisms and serves to protect cells from the toxic effects of hydrogen peroxide. The protein is Catalase of Penicillium janthinellum (Penicillium vitale).